The sequence spans 284 residues: Ribose-phosphate pyrophosphokinase (284 aa).

ATP is bound by residues aspartate 34–glutamate 36 and arginine 92–glutamine 93. 2 residues coordinate Mg(2+): histidine 125 and aspartate 163. The active site involves lysine 186. D-ribose 5-phosphate contacts are provided by residues arginine 188, aspartate 212, and serine 216–threonine 220.

This sequence belongs to the ribose-phosphate pyrophosphokinase family. Class III (archaeal) subfamily. In terms of assembly, homotetramer. Mg(2+) serves as cofactor.

The protein resides in the cytoplasm. The enzyme catalyses D-ribose 5-phosphate + ATP = 5-phospho-alpha-D-ribose 1-diphosphate + AMP + H(+). The protein operates within metabolic intermediate biosynthesis; 5-phospho-alpha-D-ribose 1-diphosphate biosynthesis; 5-phospho-alpha-D-ribose 1-diphosphate from D-ribose 5-phosphate (route I): step 1/1. With respect to regulation, activated by inorganic phosphate, with a maximal activity at 190 mM. Above this concentration inorganic phosphate progressively inhibits the kinase. Completely inhibited by ADP, and partially inhibited by alpha,beta-methylene ATP (mATP). Lack of allosteric regulation. In terms of biological role, involved in the biosynthesis of the central metabolite phospho-alpha-D-ribosyl-1-pyrophosphate (PRPP) via the transfer of pyrophosphoryl group from ATP to 1-hydroxyl of ribose-5-phosphate (Rib-5-P). It can also use dATP as diphosphoryl donor. This chain is Ribose-phosphate pyrophosphokinase, found in Methanocaldococcus jannaschii (strain ATCC 43067 / DSM 2661 / JAL-1 / JCM 10045 / NBRC 100440) (Methanococcus jannaschii).